A 131-amino-acid polypeptide reads, in one-letter code: Ribosome-binding factor A (131 aa).

Belongs to the RbfA family. In terms of assembly, monomer. Binds 30S ribosomal subunits, but not 50S ribosomal subunits or 70S ribosomes.

Its subcellular location is the cytoplasm. Its function is as follows. One of several proteins that assist in the late maturation steps of the functional core of the 30S ribosomal subunit. Associates with free 30S ribosomal subunits (but not with 30S subunits that are part of 70S ribosomes or polysomes). Required for efficient processing of 16S rRNA. May interact with the 5'-terminal helix region of 16S rRNA. The sequence is that of Ribosome-binding factor A from Thermotoga maritima (strain ATCC 43589 / DSM 3109 / JCM 10099 / NBRC 100826 / MSB8).